Consider the following 808-residue polypeptide: Leucine-rich repeat-containing protein 41 (808 aa).

Positions 45-54 (ALFELCGRAV) are interaction with Elongin BC complex. Phosphoserine is present on residues S155, S276, and S326. 2 disordered regions span residues 269–289 (ASRG…SRRP) and 304–404 (TRRK…GSGA). The residue at position 327 (T327) is a Phosphothreonine. The span at 357-379 (PSSAPTAASSSTSSKRAPASSVS) shows a compositional bias: low complexity. S369 carries the post-translational modification Phosphoserine. Over residues 383 to 397 (PLKRFKRATGKKGPR) the composition is skewed to basic residues. LRR repeat units follow at residues 483 to 503 (WVSL…IFRL), 514 to 526 (AGCR…LSDL), 527 to 551 (FSPL…VLSI), 609 to 631 (SGSL…FGLV), 632 to 655 (LQTL…LADC), 697 to 724 (NSTL…VFSE), and 727 to 748 (SSSL…LLEF).

Part of an E3 ubiquitin-protein ligase complex with Elongin BC (ELOB and ELOC), RBX1 and CUL5. Component of a probable ECS(LRRC41) complex which contains CUL5, RNF7/RBX2, Elongin BC and LRRC41. Interacts with CUL5, RNF7, ELOB and ELOC.

Its pathway is protein modification; protein ubiquitination. In terms of biological role, probable substrate recognition component of an ECS (Elongin BC-CUL2/5-SOCS-box protein) E3 ubiquitin ligase complex which mediates the ubiquitination and subsequent proteasomal degradation of target proteins. This is Leucine-rich repeat-containing protein 41 (Lrrc41) from Rattus norvegicus (Rat).